Here is a 459-residue protein sequence, read N- to C-terminus: Bifunctional protein GlmU (459 aa).

The segment at 1–229 (MLTQEIIIVI…YEEILGINNK (229 aa)) is pyrophosphorylase. UDP-N-acetyl-alpha-D-glucosamine is bound by residues 11 to 14 (LAAG), K25, Q76, 81 to 82 (GT), 103 to 105 (YGD), G140, E154, and N227. D105 contributes to the Mg(2+) binding site. N227 contributes to the Mg(2+) binding site. Residues 230 to 250 (LQLSNLEKIFQKKQINKLLIN) are linker. The interval 251-459 (GVTIKDPSHF…MRSKKIIKKN (209 aa)) is N-acetyltransferase. R333 and K351 together coordinate UDP-N-acetyl-alpha-D-glucosamine. H363 functions as the Proton acceptor in the catalytic mechanism. 2 residues coordinate UDP-N-acetyl-alpha-D-glucosamine: Y366 and N377. Residues A380, 386 to 387 (NY), S405, and A423 each bind acetyl-CoA.

In the N-terminal section; belongs to the N-acetylglucosamine-1-phosphate uridyltransferase family. It in the C-terminal section; belongs to the transferase hexapeptide repeat family. Homotrimer. It depends on Mg(2+) as a cofactor.

Its subcellular location is the cytoplasm. The enzyme catalyses alpha-D-glucosamine 1-phosphate + acetyl-CoA = N-acetyl-alpha-D-glucosamine 1-phosphate + CoA + H(+). It catalyses the reaction N-acetyl-alpha-D-glucosamine 1-phosphate + UTP + H(+) = UDP-N-acetyl-alpha-D-glucosamine + diphosphate. It participates in nucleotide-sugar biosynthesis; UDP-N-acetyl-alpha-D-glucosamine biosynthesis; N-acetyl-alpha-D-glucosamine 1-phosphate from alpha-D-glucosamine 6-phosphate (route II): step 2/2. The protein operates within nucleotide-sugar biosynthesis; UDP-N-acetyl-alpha-D-glucosamine biosynthesis; UDP-N-acetyl-alpha-D-glucosamine from N-acetyl-alpha-D-glucosamine 1-phosphate: step 1/1. Its pathway is bacterial outer membrane biogenesis; LPS lipid A biosynthesis. Functionally, catalyzes the last two sequential reactions in the de novo biosynthetic pathway for UDP-N-acetylglucosamine (UDP-GlcNAc). The C-terminal domain catalyzes the transfer of acetyl group from acetyl coenzyme A to glucosamine-1-phosphate (GlcN-1-P) to produce N-acetylglucosamine-1-phosphate (GlcNAc-1-P), which is converted into UDP-GlcNAc by the transfer of uridine 5-monophosphate (from uridine 5-triphosphate), a reaction catalyzed by the N-terminal domain. This Buchnera aphidicola subsp. Acyrthosiphon pisum (strain 5A) protein is Bifunctional protein GlmU.